We begin with the raw amino-acid sequence, 332 residues long: tRNA U34 carboxymethyltransferase (332 aa).

Carboxy-S-adenosyl-L-methionine contacts are provided by residues K96, W110, K115, G135, 157–159 (DPT), 190–191 (IE), M205, Y209, and R324.

It belongs to the class I-like SAM-binding methyltransferase superfamily. CmoB family. In terms of assembly, homotetramer.

It catalyses the reaction carboxy-S-adenosyl-L-methionine + 5-hydroxyuridine(34) in tRNA = 5-carboxymethoxyuridine(34) in tRNA + S-adenosyl-L-homocysteine + H(+). In terms of biological role, catalyzes carboxymethyl transfer from carboxy-S-adenosyl-L-methionine (Cx-SAM) to 5-hydroxyuridine (ho5U) to form 5-carboxymethoxyuridine (cmo5U) at position 34 in tRNAs. In Alteromonas mediterranea (strain DSM 17117 / CIP 110805 / LMG 28347 / Deep ecotype), this protein is tRNA U34 carboxymethyltransferase.